Here is a 431-residue protein sequence, read N- to C-terminus: 5-methylthioadenosine/S-adenosylhomocysteine deaminase (431 aa).

Positions 63 and 65 each coordinate Zn(2+). Residues glutamate 92, arginine 144, and histidine 184 each contribute to the substrate site. Residue histidine 211 coordinates Zn(2+). The substrate site is built by glutamate 214 and aspartate 299. Aspartate 299 serves as a coordination point for Zn(2+).

Belongs to the metallo-dependent hydrolases superfamily. MTA/SAH deaminase family. Zn(2+) is required as a cofactor.

The enzyme catalyses S-adenosyl-L-homocysteine + H2O + H(+) = S-inosyl-L-homocysteine + NH4(+). It carries out the reaction S-methyl-5'-thioadenosine + H2O + H(+) = S-methyl-5'-thioinosine + NH4(+). Catalyzes the deamination of 5-methylthioadenosine and S-adenosyl-L-homocysteine into 5-methylthioinosine and S-inosyl-L-homocysteine, respectively. Is also able to deaminate adenosine. The sequence is that of 5-methylthioadenosine/S-adenosylhomocysteine deaminase from Thermoanaerobacter pseudethanolicus (strain ATCC 33223 / 39E) (Clostridium thermohydrosulfuricum).